The sequence spans 346 residues: NADH-ubiquinone oxidoreductase chain 2 (346 aa).

11 helical membrane-spanning segments follow: residues 1 to 21 (MNPH…TITI), 25 to 45 (HWVL…PLIS), 60 to 80 (FLTQ…NAWA), 95 to 115 (CLLL…HFWF), 124 to 144 (LMTA…LLLM), 149 to 169 (LNPA…GWMG), 178 to 195 (ILAF…IILV), 200 to 219 (LALL…FMAL), 242 to 262 (ATLM…GFMP), 274 to 294 (EMTP…FFYL), and 326 to 346 (AILA…HAIV).

The protein belongs to the complex I subunit 2 family.

It localises to the mitochondrion inner membrane. It carries out the reaction a ubiquinone + NADH + 5 H(+)(in) = a ubiquinol + NAD(+) + 4 H(+)(out). Functionally, core subunit of the mitochondrial membrane respiratory chain NADH dehydrogenase (Complex I) that is believed to belong to the minimal assembly required for catalysis. Complex I functions in the transfer of electrons from NADH to the respiratory chain. The immediate electron acceptor for the enzyme is believed to be ubiquinone. The sequence is that of NADH-ubiquinone oxidoreductase chain 2 (MT-ND2) from Sibirionetta formosa (Baikal teal).